Consider the following 670-residue polypeptide: MGETEKRVATHEVRCFSKIKMFLLALTWAYVSKSLSGIYMNTMLTQIERQFDIPTSIVGFINGSFEIGNLLLIIFVSYFGTKLHRPIMIGVGCVIMGLGCFLMSLPHFLMGRYEYETTISPTSNLSSNSFLCMENRSQTLKPTQDPAECIKEMKSLMWIYVLVGNIIRGIGETPIMPLGISYIEDFAKSENSPLYIGILETGKVFGPIVGLLLGSFCASIYVDTGSVNTDDLTITPTDTRWVGAWWIGFLICAGVNILSSIPFFFFPKTLPKEGLQDDVDGTNNDKEEKHREKAKEENRGITKDFLPFMKSLSCNPIYMLLILTSVLQINAFINMFTFLPKYLEQQYGKSTAEVVLLIGVYNLPPICIGYLLIGFIMKKFKITVKKAAYMAFCLSLFEYLLYFLHFMITCDNFPVAGLTASYEGVHHPLYVENKVLADCNRGCSCSTNSWDPVCGDNGLAYMSACLAGCKKSVGTGTNMVFQNCSCIRSSGNSSAVLGLCKKGPECANKLQYFLIMSVIGSFIYSITAIPGYMVLLRCIKPEEKSLGIGLHAFCTRVFAGIPAPIYFGALIDRTCLHWGTLKCGEPGACRMYNINNFRRIYLVLPAALRGSSYLPALFILILMRKFQFPGEIDSSETELAEMKITVKKSECTDVHGSPQVENDGELKTRL.

At Met-1 to Lys-20 the chain is on the cytoplasmic side. The chain crosses the membrane as a helical span at residues Met-21 to Met-40. The Extracellular segment spans residues Asn-41–Gly-59. A helical membrane pass occupies residues Phe-60–Gly-80. The Cytoplasmic segment spans residues Thr-81–Pro-86. The helical transmembrane segment at Ile-87–Gly-111 threads the bilayer. Residues Arg-112–Ser-155 lie on the Extracellular side of the membrane. Asn-124 and Asn-135 each carry an N-linked (GlcNAc...) asparagine glycan. The helical transmembrane segment at Leu-156–Glu-184 threads the bilayer. The Cytoplasmic segment spans residues Asp-185–Lys-203. A helical transmembrane segment spans residues Val-204–Thr-224. The Extracellular segment spans residues Gly-225–Val-242. The helical transmembrane segment at Gly-243 to Pro-267 threads the bilayer. Topologically, residues Lys-268–Ser-311 are cytoplasmic. A helical transmembrane segment spans residues Leu-312–Ile-333. At Asn-334–Glu-353 the chain is on the extracellular side. A helical membrane pass occupies residues Val-354–Met-377. Over Lys-378–Lys-381 the chain is Cytoplasmic. The helical transmembrane segment at Ile-382–His-405 threads the bilayer. The Extracellular portion of the chain corresponds to Phe-406–Phe-513. Residues Asn-433–Arg-488 form the Kazal-like domain. 3 disulfides stabilise this stretch: Cys-439–Cys-469, Cys-445–Cys-465, and Cys-454–Cys-486. Residues Asn-483 and Asn-492 are each glycosylated (N-linked (GlcNAc...) asparagine). Residues Leu-514 to Leu-536 form a helical membrane-spanning segment. The Cytoplasmic segment spans residues Arg-537–Ser-545. The chain crosses the membrane as a helical span at residues Leu-546 to Ile-571. Residues Asp-572–Pro-605 lie on the Extracellular side of the membrane. Residues Ala-606–Met-623 traverse the membrane as a helical segment. Topologically, residues Arg-624–Leu-670 are cytoplasmic.

It belongs to the organo anion transporter (TC 2.A.60) family. In terms of tissue distribution, highly expressed in the kidney, moderately abundant in the retina, and even lower in the liver. Expressed (at protein level) in the small intestine. Expressed at lower levels in brain,lung, and retina.

The protein resides in the cell membrane. Its subcellular location is the basal cell membrane. It catalyses the reaction taurocholate(out) = taurocholate(in). The catalysed reaction is glycocholate(out) = glycocholate(in). The enzyme catalyses taurochenodeoxycholate(out) = taurochenodeoxycholate(in). It carries out the reaction tauroursodeoxycholate(out) = tauroursodeoxycholate(in). It catalyses the reaction 3,3',5'-triiodo-L-thyronine(out) = 3,3',5'-triiodo-L-thyronine(in). The catalysed reaction is L-thyroxine(out) = L-thyroxine(in). The enzyme catalyses taurodeoxycholate(out) = taurodeoxycholate(in). It carries out the reaction glycodeoxycholate(out) = glycodeoxycholate(in). It catalyses the reaction glycochenodeoxycholate(out) = glycochenodeoxycholate(in). The catalysed reaction is glycoursodeoxycholate(out) = glycoursodeoxycholate(in). The enzyme catalyses estrone 3-sulfate(out) = estrone 3-sulfate(in). It carries out the reaction prostaglandin E2(out) = prostaglandin E2(in). It catalyses the reaction substance P(out) = substance P(in). In terms of biological role, na(+)-independent transporter that mediates the cellular uptake of a broad range of organic anions such as the endogenous bile salts cholate and deoxycholate, either in their unconjugated or conjugated forms (taurocholate and glycocholate), estrone 3-sulfate and prostaglandin E2, at the plasma membrane. Responsible for intestinal absorption of bile acids. Capable of thyroid hormone transport (both T3 or 3,3',5'-triiodo-L-thyronine, and T4 or L-tyroxine). Plays roles in blood-brain and -cerebrospinal fluid barrier transport of organic anions and signal mediators, and in hormone uptake by neural cells. May also play a role in the reuptake of neuropeptides such as substance P/TAC1 and vasoactive intestinal peptide/VIP released from retinal neurons. Shows a pH-sensitive substrate specificity which may be ascribed to the protonation state of the binding site and leads to a stimulation of substrate transport in an acidic microenvironment. Hydrogencarbonate/HCO3(-) acts as the probable counteranion that exchanges for organic anions. May contribute to regulate the transport of organic compounds in testis across the blood-testis-barrier. This is Solute carrier organic anion transporter family member 1A5 (Slco1a5) from Rattus norvegicus (Rat).